A 171-amino-acid chain; its full sequence is MPIPTVTLRALRADITTLACDAIVNAANSALLGGGGVDGAIHRAAGPELLEACRALHGCRTGQAKITPGFLLPARYIIHTVGPIWRGGRQDEAALLAACYRNSLALAKQHDVRTIAFPCISTGVYGFPPQLAAPIAVRTVREHGADLDDIVFCCFSAADLALYETALNEAR.

One can recognise a Macro domain in the interval 1–171 (MPIPTVTLRA…LYETALNEAR (171 aa)).

It belongs to the MacroD-type family.

The chain is Macro domain-containing protein RSc0334 from Ralstonia nicotianae (strain ATCC BAA-1114 / GMI1000) (Ralstonia solanacearum).